The following is an 80-amino-acid chain: Putative membrane protein insertion efficiency factor (80 aa).

The protein belongs to the UPF0161 family.

The protein resides in the cell membrane. Could be involved in insertion of integral membrane proteins into the membrane. The sequence is that of Putative membrane protein insertion efficiency factor from Shouchella clausii (strain KSM-K16) (Alkalihalobacillus clausii).